A 144-amino-acid chain; its full sequence is Large ribosomal subunit protein uL16 (144 aa).

The protein belongs to the universal ribosomal protein uL16 family. Part of the 50S ribosomal subunit.

Functionally, binds 23S rRNA and is also seen to make contacts with the A and possibly P site tRNAs. The protein is Large ribosomal subunit protein uL16 of Natranaerobius thermophilus (strain ATCC BAA-1301 / DSM 18059 / JW/NM-WN-LF).